The following is a 132-amino-acid chain: MARILGVDIPNDKRVVISLTYIFGIGKSTSQKILKLANIDENIRVNDLADEQIAEIRRVALNFVKANGEKLQLEGDLRRTVAMDIKRLMEIGSYRGIRHRRGLPVRGQRTKTNARTRKGPRKTVANKKIETR.

Basic residues predominate over residues 101–125; the sequence is RGLPVRGQRTKTNARTRKGPRKTVA. Residues 101–132 form a disordered region; the sequence is RGLPVRGQRTKTNARTRKGPRKTVANKKIETR.

It belongs to the universal ribosomal protein uS13 family. Part of the 30S ribosomal subunit. Forms a loose heterodimer with protein S19. Forms two bridges to the 50S subunit in the 70S ribosome.

Functionally, located at the top of the head of the 30S subunit, it contacts several helices of the 16S rRNA. In the 70S ribosome it contacts the 23S rRNA (bridge B1a) and protein L5 of the 50S subunit (bridge B1b), connecting the 2 subunits; these bridges are implicated in subunit movement. Contacts the tRNAs in the A and P-sites. This is Small ribosomal subunit protein uS13 from Ureaplasma urealyticum serovar 10 (strain ATCC 33699 / Western).